We begin with the raw amino-acid sequence, 432 residues long: D-amino acid dehydrogenase (432 aa).

Residue 3–17 (VVILGSGVVGVASAW) participates in FAD binding.

Belongs to the DadA oxidoreductase family. FAD serves as cofactor.

The enzyme catalyses a D-alpha-amino acid + A + H2O = a 2-oxocarboxylate + AH2 + NH4(+). Its pathway is amino-acid degradation; D-alanine degradation; NH(3) and pyruvate from D-alanine: step 1/1. Functionally, oxidative deamination of D-amino acids. The polypeptide is D-amino acid dehydrogenase (Escherichia coli O45:K1 (strain S88 / ExPEC)).